Reading from the N-terminus, the 368-residue chain is MHVSMIIFVSIFSIKYIMATKYTMRVLIPKYGKGMKTEYFYNMIKESRPNASPLKITESYGRDAHLNLYALSTSQSLMLTYGKDEFWKIIENKLGNEVNETIDLDDLYPSRYRMRFVFKDLISSDNDLYMDTKFSDKITSTKQQKKWVKESVKKTKNKLEEISHSAKLWNATIYMDILKDDNMELYDDKTVTKIKKQGKVKQLPVYCHMDKSVNQYTNEIVAKRKNPIEIVDKKDVSVAPLRFNAFMATIQQKFVTGNKKDPFWANITEEYLTSVIGESELIFPAKFKVIMELENLTDPDEDKKIESTISNTVYNREEMVNMLDILIQMLIVRLNEESHPGKIWNVKATIVGIREMYDDVKTIKHFLV.

Residues 1-19 (MHVSMIIFVSIFSIKYIMA) form the signal peptide. Residues Asn99, Asn170, Asn266, and Asn295 are each glycosylated (N-linked (GlcNAc...) asparagine; by host).

This is an uncharacterized protein from Ostreid herpesvirus 1 (isolate France) (OsHV-1).